The sequence spans 497 residues: Succinate-semialdehyde dehydrogenase [NADP(+)] (497 aa).

Glu-264 acts as the Proton acceptor in catalysis. Cys-298 (nucleophile) is an active-site residue.

Belongs to the aldehyde dehydrogenase family. As to quaternary structure, homotetramer.

Its subcellular location is the cytoplasm. It carries out the reaction succinate semialdehyde + NAD(+) + H2O = succinate + NADH + 2 H(+). The catalysed reaction is succinate semialdehyde + NADP(+) + H2O = succinate + NADPH + 2 H(+). It functions in the pathway amino-acid degradation; 4-aminobutanoate degradation. With respect to regulation, inhibited by AMP, ADP anf ATP. In terms of biological role, catalyzes the oxidation of succinate semialdehyde to succinate. Can utilize both NAD(+) or NADP(+) as a coenzyme, but has a 2.5-fold lower activity with NADP(+) than with NAD(+). Functions in a gamma-aminobutyrate (GABA) degradation pathway that allows growth utilizing GABA as a nitrogen source. Functions in the GABA shunt, which allows to bypass 2 reactions in the TCA cycle by removing alpha-ketoglutarate from the cycle and feeding succinate and NADH back into the cycle. This is Succinate-semialdehyde dehydrogenase [NADP(+)] from Saccharomyces cerevisiae (strain ATCC 204508 / S288c) (Baker's yeast).